The primary structure comprises 1279 residues: Amylopullulanase (1279 aa).

The N-terminal stretch at 1-35 (MYKKLFTKKFISFVMSLLLVLTAAFSSMPFHNVYA) is a signal peptide. The Ca(2+) site is built by Asp248, Asn250, Asp288, Asp343, Asn401, Asp403, Asn406, Asp407, Gly452, and Asp454. Residues His527 and Arg627 each contribute to the substrate site. Catalysis depends on Asp629, which acts as the Nucleophile. Glu658 serves as the catalytic Proton donor. Substrate contacts are provided by residues 734–735 (HD), Asp794, and Arg798. Fibronectin type-III domains lie at 930 to 1022 (APQV…AYPI) and 1158 to 1252 (KPTA…VVPI).

Belongs to the glycosyl hydrolase 13 family. Ca(2+) is required as a cofactor.

It carries out the reaction Endohydrolysis of (1-&gt;4)-alpha-D-glucosidic linkages in polysaccharides containing three or more (1-&gt;4)-alpha-linked D-glucose units.. The enzyme catalyses Hydrolysis of (1-&gt;6)-alpha-D-glucosidic linkages in pullulan, amylopectin and glycogen, and in the alpha- and beta-limit dextrins of amylopectin and glycogen.. This chain is Amylopullulanase (apu), found in Thermoanaerobacterium saccharolyticum.